The chain runs to 258 residues: Deoxyribose-phosphate aldolase 2 (258 aa).

Aspartate 102 serves as the catalytic Proton donor/acceptor. Catalysis depends on lysine 165, which acts as the Schiff-base intermediate with acetaldehyde. Lysine 199 functions as the Proton donor/acceptor in the catalytic mechanism.

It belongs to the DeoC/FbaB aldolase family. DeoC type 2 subfamily.

The protein resides in the cytoplasm. The catalysed reaction is 2-deoxy-D-ribose 5-phosphate = D-glyceraldehyde 3-phosphate + acetaldehyde. It participates in carbohydrate degradation; 2-deoxy-D-ribose 1-phosphate degradation; D-glyceraldehyde 3-phosphate and acetaldehyde from 2-deoxy-alpha-D-ribose 1-phosphate: step 2/2. Functionally, catalyzes a reversible aldol reaction between acetaldehyde and D-glyceraldehyde 3-phosphate to generate 2-deoxy-D-ribose 5-phosphate. The protein is Deoxyribose-phosphate aldolase 2 (deoC2) of Vibrio vulnificus (strain YJ016).